The sequence spans 513 residues: Light-independent protochlorophyllide reductase subunit B (513 aa).

Aspartate 36 provides a ligand contact to [4Fe-4S] cluster. Residue aspartate 299 is the Proton donor of the active site. 434–435 (GM) is a substrate binding site.

The protein belongs to the ChlB/BchB/BchZ family. Protochlorophyllide reductase is composed of three subunits; ChlL, ChlN and ChlB. Forms a heterotetramer of two ChlB and two ChlN subunits. Requires [4Fe-4S] cluster as cofactor.

It localises to the plastid. The protein resides in the chloroplast. The enzyme catalyses chlorophyllide a + oxidized 2[4Fe-4S]-[ferredoxin] + 2 ADP + 2 phosphate = protochlorophyllide a + reduced 2[4Fe-4S]-[ferredoxin] + 2 ATP + 2 H2O. Its pathway is porphyrin-containing compound metabolism; chlorophyll biosynthesis (light-independent). Functionally, component of the dark-operative protochlorophyllide reductase (DPOR) that uses Mg-ATP and reduced ferredoxin to reduce ring D of protochlorophyllide (Pchlide) to form chlorophyllide a (Chlide). This reaction is light-independent. The NB-protein (ChlN-ChlB) is the catalytic component of the complex. This is Light-independent protochlorophyllide reductase subunit B from Chaetosphaeridium globosum (Charophycean green alga).